We begin with the raw amino-acid sequence, 879 residues long: Alanine--tRNA ligase (879 aa).

Positions 566, 570, 668, and 672 each coordinate Zn(2+).

This sequence belongs to the class-II aminoacyl-tRNA synthetase family. The cofactor is Zn(2+).

The protein localises to the cytoplasm. The catalysed reaction is tRNA(Ala) + L-alanine + ATP = L-alanyl-tRNA(Ala) + AMP + diphosphate. Functionally, catalyzes the attachment of alanine to tRNA(Ala) in a two-step reaction: alanine is first activated by ATP to form Ala-AMP and then transferred to the acceptor end of tRNA(Ala). Also edits incorrectly charged Ser-tRNA(Ala) and Gly-tRNA(Ala) via its editing domain. The sequence is that of Alanine--tRNA ligase from Oceanobacillus iheyensis (strain DSM 14371 / CIP 107618 / JCM 11309 / KCTC 3954 / HTE831).